The chain runs to 542 residues: Chaperonin GroEL (542 aa).

Residues threonine 29–proline 32, aspartate 86–threonine 90, glycine 413, asparagine 477–alanine 479, and aspartate 493 each bind ATP.

The protein belongs to the chaperonin (HSP60) family. As to quaternary structure, forms a cylinder of 14 subunits composed of two heptameric rings stacked back-to-back. Interacts with the co-chaperonin GroES.

Its subcellular location is the cytoplasm. The enzyme catalyses ATP + H2O + a folded polypeptide = ADP + phosphate + an unfolded polypeptide.. Functionally, together with its co-chaperonin GroES, plays an essential role in assisting protein folding. The GroEL-GroES system forms a nano-cage that allows encapsulation of the non-native substrate proteins and provides a physical environment optimized to promote and accelerate protein folding. In Heliobacterium modesticaldum (strain ATCC 51547 / Ice1), this protein is Chaperonin GroEL.